We begin with the raw amino-acid sequence, 318 residues long: Acetyl-coenzyme A carboxylase carboxyl transferase subunit alpha (318 aa).

One can recognise a CoA carboxyltransferase C-terminal domain in the interval aspartate 32–glutamate 293.

The protein belongs to the AccA family. In terms of assembly, acetyl-CoA carboxylase is a heterohexamer composed of biotin carboxyl carrier protein (AccB), biotin carboxylase (AccC) and two subunits each of ACCase subunit alpha (AccA) and ACCase subunit beta (AccD).

It localises to the cytoplasm. It carries out the reaction N(6)-carboxybiotinyl-L-lysyl-[protein] + acetyl-CoA = N(6)-biotinyl-L-lysyl-[protein] + malonyl-CoA. The protein operates within lipid metabolism; malonyl-CoA biosynthesis; malonyl-CoA from acetyl-CoA: step 1/1. Its function is as follows. Component of the acetyl coenzyme A carboxylase (ACC) complex. First, biotin carboxylase catalyzes the carboxylation of biotin on its carrier protein (BCCP) and then the CO(2) group is transferred by the carboxyltransferase to acetyl-CoA to form malonyl-CoA. This is Acetyl-coenzyme A carboxylase carboxyl transferase subunit alpha from Syntrophomonas wolfei subsp. wolfei (strain DSM 2245B / Goettingen).